Here is an 882-residue protein sequence, read N- to C-terminus: Alanine--tRNA ligase (882 aa).

Zn(2+)-binding residues include histidine 570, histidine 574, cysteine 672, and histidine 676.

It belongs to the class-II aminoacyl-tRNA synthetase family. Zn(2+) is required as a cofactor.

The protein localises to the cytoplasm. The catalysed reaction is tRNA(Ala) + L-alanine + ATP = L-alanyl-tRNA(Ala) + AMP + diphosphate. In terms of biological role, catalyzes the attachment of alanine to tRNA(Ala) in a two-step reaction: alanine is first activated by ATP to form Ala-AMP and then transferred to the acceptor end of tRNA(Ala). Also edits incorrectly charged Ser-tRNA(Ala) and Gly-tRNA(Ala) via its editing domain. In Xanthomonas campestris pv. campestris (strain B100), this protein is Alanine--tRNA ligase.